Here is a 462-residue protein sequence, read N- to C-terminus: Nuclear factor interleukin-3-regulated protein (462 aa).

Residue K24 forms a Glycyl lysine isopeptide (Lys-Gly) (interchain with G-Cter in SUMO2) linkage. Residues 73–136 (DAMYWEKRRK…GLISSTAYAQ (64 aa)) form the bZIP domain. The tract at residues 79 to 95 (KRRKNNEAAKRSREKRR) is basic motif. The segment at 99 to 106 (LVLENKLI) is leucine-zipper. Disordered stretches follow at residues 189-237 (DVSE…DDRG) and 258-302 (SPPL…IHSP). The segment covering 201-210 (ESSVQGSCRS) has biased composition (polar residues). A Glycyl lysine isopeptide (Lys-Gly) (interchain with G-Cter in SUMO2) cross-link involves residue K214. A Glycyl lysine isopeptide (Lys-Gly) (interchain with G-Cter in SUMO1); alternate cross-link involves residue K219. A Glycyl lysine isopeptide (Lys-Gly) (interchain with G-Cter in SUMO2); alternate cross-link involves residue K219. Over residues 227-237 (SYTREPRDDRG) the composition is skewed to basic and acidic residues. Over residues 264 to 274 (VNRSSSNSPRT) the composition is skewed to polar residues. Residues 299–363 (IHSPVELKHV…PIDMTSKRHF (65 aa)) are necessary for transcriptional repression and sufficient for interaction with DR1. S301 is subject to Phosphoserine. Residues K306, K314, K326, K332, K337, and K350 each participate in a glycyl lysine isopeptide (Lys-Gly) (interchain with G-Cter in SUMO2) cross-link. Position 353 is a phosphoserine (S353). Residues K360, K394, K401, K406, K412, K419, K424, K434, and K448 each participate in a glycyl lysine isopeptide (Lys-Gly) (interchain with G-Cter in SUMO2) cross-link.

It belongs to the bZIP family. NFIL3 subfamily. Homodimer. Binds DNA as a dimer. Interacts with DR1. Interacts with PER2 and CRY2. Interacts with NR0B2. Interacts with MYSM1. Expressed in bladder stomach, thyroid, spinal cord, lymph node, trachea, adrenal gland, bone marrow and muscle.

It is found in the nucleus. Its function is as follows. Acts as a transcriptional regulator that recognizes and binds to the sequence 5'-[GA]TTA[CT]GTAA[CT]-3', a sequence present in many cellular and viral promoters. Represses transcription from promoters with activating transcription factor (ATF) sites. Represses promoter activity in osteoblasts. Represses transcriptional activity of PER1. Represses transcriptional activity of PER2 via the B-site on the promoter. Activates transcription from the interleukin-3 promoter in T-cells. Competes for the same consensus-binding site with PAR DNA-binding factors (DBP, HLF and TEF). Component of the circadian clock that acts as a negative regulator for the circadian expression of PER2 oscillation in the cell-autonomous core clock. Protects pro-B cells from programmed cell death. Represses the transcription of CYP2A5. Positively regulates the expression and activity of CES2 by antagonizing the repressive action of NR1D1 on CES2. Required for the development of natural killer cell precursors. This is Nuclear factor interleukin-3-regulated protein (NFIL3) from Homo sapiens (Human).